A 94-amino-acid chain; its full sequence is Integration host factor subunit beta (94 aa).

This sequence belongs to the bacterial histone-like protein family. In terms of assembly, heterodimer of an alpha and a beta chain.

In terms of biological role, this protein is one of the two subunits of integration host factor, a specific DNA-binding protein that functions in genetic recombination as well as in transcriptional and translational control. This is Integration host factor subunit beta from Haemophilus influenzae (strain 86-028NP).